A 133-amino-acid chain; its full sequence is U-scoloptoxin(11)-Sm1a (133 aa).

The signal sequence occupies residues M1 to S19.

It belongs to the scoloptoxin-11 family. In terms of processing, contains 10 disulfide bonds. As to expression, expressed by the venom gland.

It is found in the secreted. The polypeptide is U-scoloptoxin(11)-Sm1a (Scolopendra morsitans (Tanzanian blue ringleg centipede)).